Consider the following 100-residue polypeptide: MARKERLTNEKLNKLFDSPFSLVNYVIKQTKNRIARGDVRSSNVAIEALNFLDLYGIQSECLERDDREQYASGAGEKRKEQSSGNSRRKDPSLYNWSDVK.

Over residues glutamate 68 to proline 91 the composition is skewed to basic and acidic residues. The tract at residues glutamate 68–lysine 100 is disordered.

It belongs to the chlamydial CPn_0121/CT_031/TC_0300 family.

This is an uncharacterized protein from Chlamydia muridarum (strain MoPn / Nigg).